Reading from the N-terminus, the 2193-residue chain is Genome polyprotein (2193 aa).

Gly2 carries N-myristoyl glycine; by host lipidation. At 2–1503 (GAQVSTQKTG…HVSRAFICLQ (1502 aa)) the chain is on the cytoplasmic side. The amphipathic alpha-helix stretch occupies residues 567–583 (ELQSDVREAVEGAIGRV). Active-site for protease 2A activity residues include His880 and Asp898. 2 residues coordinate Zn(2+): Cys915 and Cys917. Cys969 acts as the For protease 2A activity in catalysis. Zn(2+)-binding residues include Cys975 and His977. The membrane-binding stretch occupies residues 1109 to 1181 (NNRWLKKFTE…EQSAPSQGDQ (73 aa)). The interval 1109-1247 (NNRWLKKFTE…SPGAGKSVAT (139 aa)) is oligomerization. The interval 1130-1134 (AIKIQ) is RNA-binding. The SF3 helicase domain occupies 1213–1369 (EKKMSNYIQF…SMYSQNGKIN (157 aa)). Zn(2+) contacts are provided by Cys1377, Cys1389, and Cys1394. The C4-type; degenerate zinc finger occupies 1377 to 1394 (CDEECCPVNFKKCCPLVC). The RNA-binding stretch occupies residues 1421-1428 (EYNHRHSV). An oligomerization region spans residues 1432 to 1437 (LEALFQ). The stretch at 1504–1519 (ALTTFVSVAGIIYIIY) is an intramembrane region. Residues 1520–2193 (KLFAGFQGAY…TLRRKWLDSF (674 aa)) are Cytoplasmic-facing. O-(5'-phospho-RNA)-tyrosine is present on Tyr1529. The region spanning 1549–1727 (GPAFEFAVAM…FSAALLKHYF (179 aa)) is the Peptidase C3 domain. Residues His1588, Glu1619, and Cys1695 each act as for protease 3C activity in the active site. One can recognise a RdRp catalytic domain in the interval 1958-2074 (GHLIAFDYSG…SYPWPIDASL (117 aa)). Mg(2+) contacts are provided by Asp1964 and Asp2060.

This sequence belongs to the picornaviruses polyprotein family. As to quaternary structure, interacts with capsid protein VP1 and capsid protein VP3 to form heterotrimeric protomers. Interacts with capsid protein VP0, and capsid protein VP3 to form heterotrimeric protomers. Five protomers subsequently associate to form pentamers which serve as building blocks for the capsid. Interacts with capsid protein VP2, capsid protein VP3 and capsid protein VP4 following cleavage of capsid protein VP0. In terms of assembly, interacts with capsid protein VP1 and capsid protein VP3 in the mature capsid. As to quaternary structure, interacts with capsid protein VP0 and capsid protein VP1 to form heterotrimeric protomers. Five protomers subsequently associate to form pentamers which serve as building blocks for the capsid. Interacts with capsid protein VP4 in the mature capsid. Interacts with protein 2C; this interaction may be important for virion morphogenesis. Interacts with capsid protein VP1 and capsid protein VP3. In terms of assembly, homodimer. As to quaternary structure, homohexamer; forms a hexameric ring structure with 6-fold symmetry characteristic of AAA+ ATPases. Interacts (via N-terminus) with host RTN3 (via reticulon domain); this interaction is important for viral replication. Interacts with capsid protein VP3; this interaction may be important for virion morphogenesis. Interacts with protein 3CD. In terms of assembly, homodimer. Interacts with host GBF1. Interacts (via GOLD domain) with host ACBD3 (via GOLD domain); this interaction allows the formation of a viral protein 3A/ACBD3 heterotetramer with a 2:2 stoichiometry, which will stimulate the recruitment of host PI4KB in order to synthesize PI4P at the viral RNA replication sites. As to quaternary structure, interacts with RNA-directed RNA polymerase. Interacts with protein 3AB and with RNA-directed RNA polymerase. In terms of assembly, interacts with Viral protein genome-linked and with protein 3CD. The cofactor is Mg(2+). Specific enzymatic cleavages in vivo by the viral proteases yield processing intermediates and the mature proteins. Post-translationally, myristoylation is required for the formation of pentamers during virus assembly. Further assembly of 12 pentamers and a molecule of genomic RNA generates the provirion. In terms of processing, during virion maturation, immature virions are rendered infectious following cleavage of VP0 into VP4 and VP2. This maturation seems to be an autocatalytic event triggered by the presence of RNA in the capsid and it is followed by a conformational change infectious virion. Myristoylation is required during RNA encapsidation and formation of the mature virus particle. Post-translationally, VPg is uridylylated by the polymerase into VPg-pUpU. This acts as a nucleotide-peptide primer for the genomic RNA replication.

Its subcellular location is the virion. The protein localises to the host cytoplasm. The protein resides in the host cytoplasmic vesicle membrane. It localises to the host nucleus. The enzyme catalyses a ribonucleoside 5'-triphosphate + H2O = a ribonucleoside 5'-diphosphate + phosphate + H(+). The catalysed reaction is Selective cleavage of Tyr-|-Gly bond in the picornavirus polyprotein.. It catalyses the reaction RNA(n) + a ribonucleoside 5'-triphosphate = RNA(n+1) + diphosphate. It carries out the reaction Selective cleavage of Gln-|-Gly bond in the poliovirus polyprotein. In other picornavirus reactions Glu may be substituted for Gln, and Ser or Thr for Gly.. Its activity is regulated as follows. Replication or transcription is subject to high level of random mutations by the nucleotide analog ribavirin. Its function is as follows. Forms an icosahedral capsid of pseudo T=3 symmetry with capsid proteins VP2 and VP3. The capsid is 300 Angstroms in diameter, composed of 60 copies of each capsid protein and enclosing the viral positive strand RNA genome. Capsid protein VP1 mainly forms the vertices of the capsid. Capsid protein VP1 interacts with host cell receptor to provide virion attachment to target host cells. This attachment induces virion internalization. Tyrosine kinases are probably involved in the entry process. After binding to its receptor, the capsid undergoes conformational changes. Capsid protein VP1 N-terminus (that contains an amphipathic alpha-helix) and capsid protein VP4 are externalized. Together, they shape a pore in the host membrane through which viral genome is translocated to host cell cytoplasm. In terms of biological role, forms an icosahedral capsid of pseudo T=3 symmetry with capsid proteins VP2 and VP3. The capsid is 300 Angstroms in diameter, composed of 60 copies of each capsid protein and enclosing the viral positive strand RNA genome. Functionally, lies on the inner surface of the capsid shell. After binding to the host receptor, the capsid undergoes conformational changes. Capsid protein VP4 is released, Capsid protein VP1 N-terminus is externalized, and together, they shape a pore in the host membrane through which the viral genome is translocated into the host cell cytoplasm. Component of immature procapsids, which is cleaved into capsid proteins VP4 and VP2 after maturation. Allows the capsid to remain inactive before the maturation step. Its function is as follows. Cysteine protease that cleaves viral polyprotein and specific host proteins. It is responsible for the autocatalytic cleavage between the P1 and P2 regions, which is the first cleavage occurring in the polyprotein. Also cleaves the host translation initiation factor EIF4G1, in order to shut down the capped cellular mRNA translation. Inhibits the host nucleus-cytoplasm protein and RNA trafficking by cleaving host members of the nuclear pores. Counteracts stress granule formation probably by antagonizing its assembly or promoting its dissassembly. In terms of biological role, plays an essential role in the virus replication cycle by acting as a viroporin. Creates a pore in the host endoplasmic reticulum and as a consequence releases Ca2+ in the cytoplasm of infected cell. In turn, high levels of cytoplasmic calcium may trigger membrane trafficking and transport of viral ER-associated proteins to viroplasms, sites of viral genome replication. Functionally, induces and associates with structural rearrangements of intracellular membranes. Displays RNA-binding, nucleotide binding and NTPase activities. May play a role in virion morphogenesis and viral RNA encapsidation by interacting with the capsid protein VP3. Localizes the viral replication complex to the surface of membranous vesicles. Together with protein 3CD binds the Cis-Active RNA Element (CRE) which is involved in RNA synthesis initiation. Acts as a cofactor to stimulate the activity of 3D polymerase, maybe through a nucleid acid chaperone activity. Its function is as follows. Localizes the viral replication complex to the surface of membranous vesicles. It inhibits host cell endoplasmic reticulum-to-Golgi apparatus transport and causes the disassembly of the Golgi complex, possibly through GBF1 interaction. This would result in depletion of MHC, trail receptors and IFN receptors at the host cell surface. Plays an essential role in viral RNA replication by recruiting ACBD3 and PI4KB at the viral replication sites, thereby allowing the formation of the rearranged membranous structures where viral replication takes place. In terms of biological role, acts as a primer for viral RNA replication and remains covalently bound to viral genomic RNA. VPg is uridylylated prior to priming replication into VPg-pUpU. The oriI viral genomic sequence may act as a template for this. The VPg-pUpU is then used as primer on the genomic RNA poly(A) by the RNA-dependent RNA polymerase to replicate the viral genome. During genome replication, the VPg-RNA linkage is removed by the host TDP2, thereby accelerating replication. During the late stage of the replication cycle, host TDP2 is excluded from sites of viral RNA synthesis and encapsidation, allowing for the generation of progeny virions. Functionally, involved in the viral replication complex and viral polypeptide maturation. It exhibits protease activity with a specificity and catalytic efficiency that is different from protease 3C. Protein 3CD lacks polymerase activity. Protein 3CD binds to the 5'UTR of the viral genome. Replicates the viral genomic RNA on the surface of intracellular membranes. May form linear arrays of subunits that propagate along a strong head-to-tail interaction called interface-I. Covalently attaches UMP to a tyrosine of VPg, which is used to prime RNA synthesis. The positive stranded RNA genome is first replicated at virus induced membranous vesicles, creating a dsRNA genomic replication form. This dsRNA is then used as template to synthesize positive stranded RNA genomes. ss(+)RNA genomes are either translated, replicated or encapsidated. Its function is as follows. Major viral protease that mediates proteolytic processing of the polyprotein. Cleaves host EIF5B, contributing to host translation shutoff. Also cleaves host PABPC1, contributing to host translation shutoff. Cleaves host NLRP1, triggers host N-glycine-mediated degradation of the autoinhibitory NLRP1 N-terminal fragment. The chain is Genome polyprotein from Echovirus 9 (strain Hill).